The chain runs to 891 residues: Valine--tRNA ligase (891 aa).

A 'HIGH' region motif is present at residues 43-53 (PFTSGTLHLGH). The 'KMSKS' region signature appears at 536–540 (KMSKS). K539 serves as a coordination point for ATP.

The protein belongs to the class-I aminoacyl-tRNA synthetase family. ValS type 2 subfamily.

Its subcellular location is the cytoplasm. The catalysed reaction is tRNA(Val) + L-valine + ATP = L-valyl-tRNA(Val) + AMP + diphosphate. In terms of biological role, catalyzes the attachment of valine to tRNA(Val). As ValRS can inadvertently accommodate and process structurally similar amino acids such as threonine, to avoid such errors, it has a 'posttransfer' editing activity that hydrolyzes mischarged Thr-tRNA(Val) in a tRNA-dependent manner. The chain is Valine--tRNA ligase from Pyrococcus horikoshii (strain ATCC 700860 / DSM 12428 / JCM 9974 / NBRC 100139 / OT-3).